A 574-amino-acid chain; its full sequence is MKIYEIVPVALGKKMPDVLIKNVNLVNVFTGKIEKTNIALYKKRIAGIGDDYKVGKEVIDAKGLFAIPGLIDAHVHIESSMLSPTEFAKLILPFGTTTIIADPHEIANVLGVEGIEYMIKSTEGIPLNVYFAIPSAVPATNLETSGATLGAEDMVSLVEKYPFRIIALGEVMNYPGVLDCDRDLITKIEILRHKYKKIDGHAPGLTGKELNAYIDAFVRSDHECETKEEALEKLSKGMQIFIREGTAARNLNALLPAVNEMNHFFFSFCTDDRDPNDIIERGHINGIIKSAIDSGIDPIIAIRMATINTAKYFNLRSMGAISPGYKADIVFIDNLKDFNIKFVIKDSKIVVEDKRINMNVESIIRNIPNTLGKINIVKNYSLSIKNRNRKIRVISVKSGTLLTDELIVEPNVEKGYVVSDIDRDIIKIAVFDRHKASGYSIGFVHGLSIKNGAVATTIGHDSHNLTVVGTNDEDMNYAISRIKELNGGIVVVKNKKLIASLSLPIAGLMSDKNYGFVVEELRKLKNSLVEIGVNSDILMQIHFLQLAVIPKLKITDKGLIDVEKQKIVDLFVEV.

The protein belongs to the metallo-dependent hydrolases superfamily. Adenine deaminase family. Requires Mn(2+) as cofactor.

The catalysed reaction is adenine + H2O + H(+) = hypoxanthine + NH4(+). The protein is Adenine deaminase of Thermosipho africanus (strain TCF52B).